We begin with the raw amino-acid sequence, 285 residues long: Diaminopimelate epimerase (285 aa).

Substrate is bound by residues asparagine 11 and asparagine 62. Cysteine 71 functions as the Proton donor in the catalytic mechanism. Substrate contacts are provided by residues glycine 72–asparagine 73, asparagine 167, asparagine 200, and glutamate 218–arginine 219. The active-site Proton acceptor is cysteine 227. Glycine 228 to threonine 229 provides a ligand contact to substrate.

Belongs to the diaminopimelate epimerase family. In terms of assembly, homodimer.

The protein localises to the cytoplasm. It catalyses the reaction (2S,6S)-2,6-diaminopimelate = meso-2,6-diaminopimelate. Its pathway is amino-acid biosynthesis; L-lysine biosynthesis via DAP pathway; DL-2,6-diaminopimelate from LL-2,6-diaminopimelate: step 1/1. In terms of biological role, catalyzes the stereoinversion of LL-2,6-diaminopimelate (L,L-DAP) to meso-diaminopimelate (meso-DAP), a precursor of L-lysine and an essential component of the bacterial peptidoglycan. This chain is Diaminopimelate epimerase, found in Agathobacter rectalis (strain ATCC 33656 / DSM 3377 / JCM 17463 / KCTC 5835 / VPI 0990) (Eubacterium rectale).